The chain runs to 373 residues: 5-amino-6-(5-phospho-D-ribitylamino)uracil phosphatase, chloroplastic (373 aa).

It belongs to the HAD-like hydrolase superfamily. DOG/GPP family. As to quaternary structure, homodimer. Mg(2+) serves as cofactor.

It is found in the plastid. Its subcellular location is the chloroplast. It catalyses the reaction 5-amino-6-(5-phospho-D-ribitylamino)uracil + H2O = 5-amino-6-(D-ribitylamino)uracil + phosphate. In terms of biological role, catalyzes the dephosphorylation of 5-amino-6-(5-phospho-D-ribitylamino)uracil, also known as ARPP, but has no activity toward flavin mononucleotide (FMN). In Arabidopsis thaliana (Mouse-ear cress), this protein is 5-amino-6-(5-phospho-D-ribitylamino)uracil phosphatase, chloroplastic.